Consider the following 721-residue polypeptide: MPRSSEAGYCCLSRDSNMPDSRDDQQQGASMGTSPDNSQTSSLIDGRTLSKESPSHGLELSAPEKARAASLDASEEALWTTRADGRVRLRLEPFCTQLPYTVHQMFYEALDKYGNLSALGFKRKDKWERISYYQYYLIARKVAKGFLKLGLERAHSVAILGFNSPEWFFSAVGTVFAGGIVTGIYTTSSPEACQYIAHDCRANVIVVDTQKQLEKILKIWKDLPHLKAVVIYQEPPPKKMANVYTMEELIELGQEVPEEALDAIIDTQQPNQCCVLVYTSGTTGNPKGVMLSQDNITWTARYGSQAGDIQPAEVQQEVVVSYLPLSHIAAQIYDLWTGIQWGAQVCFADPDALKGTLVNTLREVEPTSHMGVPRVWEKIMERIQEVAAQSGFIRRKMLLWAMSVTLEQNLTCPSNDLKPFTSRLADYLVLARVRQALGFAKCQKNFYGAAPMTAETQRFFLGLNIRLYAGYGLSESTGPHFMSSPYNYRLYSSGRVVPGCRVKLVNQDADGIGEICLWGRTIFMGYLNMEDKTHEAIDSEGWLHTGDMGRLDDDGFLYITGRLKELIITAGGENVPPVPIEEAVKMELPIISSAMLIGDQRKFLSMLLTLKCTLNPETSEPTDNLTEQAVEFCQRVGSKASTVSEIVGQKDEAVYQAIHEGIQRVNANAAARPYHIQKWAILERDFSISGGELGPTMKLKRLTVLEKYKDIIDSFYQEQKQ.

Residues 1–64 (MPRSSEAGYC…SHGLELSAPE (64 aa)) are disordered. Positions 26–43 (QQGASMGTSPDNSQTSSL) are enriched in polar residues. 4 positions are modified to phosphoserine: S34, S50, S53, and S70. ATP contacts are provided by residues 279–287 (TSGTTGNPK), 469–474 (AGYGLS), D547, and R562. Phosphotyrosine is present on Y655. Position 698 (K698) interacts with ATP.

Belongs to the ATP-dependent AMP-binding enzyme family. Bubblegum subfamily. Present in testis, at a lower level in brain, and at a very low level in ovary. Not detected in other tissues. tested. Present in Leydig cells of the adult testis and to a lesser degree in the seminiferous tubules in spermatogonia and Sertoli cells (at protein level).

The protein resides in the cytoplasm. The protein localises to the cytoplasmic vesicle. It is found in the microsome. Its subcellular location is the endoplasmic reticulum. It localises to the cell membrane. It catalyses the reaction a long-chain fatty acid + ATP + CoA = a long-chain fatty acyl-CoA + AMP + diphosphate. The catalysed reaction is (E)-hexadec-2-enoate + ATP + CoA = (2E)-hexadecenoyl-CoA + AMP + diphosphate. The enzyme catalyses hexadecanoate + ATP + CoA = hexadecanoyl-CoA + AMP + diphosphate. In terms of biological role, catalyzes the conversion of fatty acids such as long-chain and very long-chain fatty acids to their active form acyl-CoAs for both synthesis of cellular lipids, and degradation via beta-oxidation. Can activate diverse saturated, monosaturated and polyunsaturated fatty acids. The sequence is that of Long-chain-fatty-acid--CoA ligase ACSBG1 from Rattus norvegicus (Rat).